A 148-amino-acid chain; its full sequence is MEGRQYYPPRENVEGNRTTMGGGPHSPWHSPVPYLFGGLAAMLGLIAFALLILACSYWRLSGYLDGEENQSRERDLEVGDVKPDKTAVKPVALPEKFLVIMAGNVKPTYLATPSVKTCTCDDDDDEDDDVEGSDQVVPRSSESNGETH.

The segment at Met1–Pro24 is disordered. Topologically, residues Met1–Tyr34 are extracellular. A helical transmembrane segment spans residues Leu35–Cys55. Residues Ser56–His148 are Cytoplasmic-facing. Residues Val99–Gly103 carry the VIMAG motif. Acidic residues predominate over residues Cys120–Gly132. Residues Cys120–His148 are disordered. The segment covering Pro138–His148 has biased composition (polar residues).

This sequence belongs to the GLUTAMINE DUMPER 1 (TC 9.B.60) family. In terms of tissue distribution, expressed in the vascular tissues. Also detected in anthers.

It localises to the membrane. Probable subunit of an amino acid transporter involved in the regulation of the amino acid metabolism. Stimulates amino acid export by activating nonselective amino acid facilitators. Acts upstream genes involved in the salicylic acid (SA) pathway and in the geminivirus-host interaction. The chain is Protein GLUTAMINE DUMPER 3 (GDU3) from Arabidopsis thaliana (Mouse-ear cress).